We begin with the raw amino-acid sequence, 227 residues long: Ribose-5-phosphate isomerase A (227 aa).

Substrate contacts are provided by residues 26–29 (TGST), 82–85 (DGAD), and 95–98 (KGGG). The active-site Proton acceptor is the Glu104. Lys122 contacts substrate.

It belongs to the ribose 5-phosphate isomerase family. Homodimer.

The enzyme catalyses aldehydo-D-ribose 5-phosphate = D-ribulose 5-phosphate. Its pathway is carbohydrate degradation; pentose phosphate pathway; D-ribose 5-phosphate from D-ribulose 5-phosphate (non-oxidative stage): step 1/1. Functionally, catalyzes the reversible conversion of ribose-5-phosphate to ribulose 5-phosphate. In Streptococcus pneumoniae (strain Hungary19A-6), this protein is Ribose-5-phosphate isomerase A.